Reading from the N-terminus, the 299-residue chain is Putative adenosine/adenine deaminase (299 aa).

Zn(2+)-binding residues include His-16 and His-18. The substrate site is built by His-18 and Gly-157. His-184 contributes to the Zn(2+) binding site. The active-site Proton donor is the Glu-187. Zn(2+) is bound at residue Asp-265. Asp-266 contributes to the substrate binding site.

Belongs to the metallo-dependent hydrolases superfamily. Adenosine and AMP deaminases family. Zn(2+) serves as cofactor.

Functionally, putative nucleoside deaminase. May catalyze the hydrolytic deamination of adenosine or some similar substrate and play a role in purine metabolism. The protein is Putative adenosine/adenine deaminase of Treponema pallidum (strain Nichols).